A 127-amino-acid polypeptide reads, in one-letter code: Gamma-synuclein (127 aa).

2 repeat units span residues 20-30 (EKTKQGVTEAA) and 31-41 (EKTKEGVMYVG). Residues 20–67 (EKTKQGVTEAAEKTKEGVMYVGAKTKEGVVQSVTSVAEKTKEQANAVS) are 4 X 11 AA tandem repeats of [EGSA]-K-T-K-[EQ]-[GQ]-V-X(4). The stretch at 42 to 56 (AKTKEGVVQSVTSVA) is one 3; approximate repeat. The stretch at 57-67 (EKTKEQANAVS) is repeat 4. Phosphoserine is present on residues serine 67, serine 72, and serine 124. A disordered region spans residues 99-127 (ALKQPVPSQEDEAAKAEEQVAEETKSGGD). The span at 110–127 (EAAKAEEQVAEETKSGGD) shows a compositional bias: basic and acidic residues.

Belongs to the synuclein family. May be a centrosome-associated protein. Interacts with MYOC; affects its secretion and its aggregation. Phosphorylated by BARK1 and GRK5. Predominantly expressed in retina (predominantly in outer nuclear layer, also in inner segment of photoreceptor cells, some individual cells located in the inner nuclear layer, inner plexiform layer and in nerve fiber layer). Also found in brain and heart.

It localises to the cytoplasm. It is found in the perinuclear region. Its subcellular location is the cytoskeleton. The protein resides in the microtubule organizing center. The protein localises to the centrosome. It localises to the spindle. Its function is as follows. Plays a role in neurofilament network integrity. May be involved in modulating axonal architecture during development and in the adult. In vitro, increases the susceptibility of neurofilament-H to calcium-dependent proteases. May also function in modulating the keratin network in skin. Activates the MAPK and Elk-1 signal transduction pathway. This is Gamma-synuclein (SNCG) from Bos taurus (Bovine).